The primary structure comprises 358 residues: Tetraacyldisaccharide 4'-kinase (358 aa).

Ile-71–Thr-78 is a binding site for ATP.

It belongs to the LpxK family.

The catalysed reaction is a lipid A disaccharide + ATP = a lipid IVA + ADP + H(+). The protein operates within glycolipid biosynthesis; lipid IV(A) biosynthesis; lipid IV(A) from (3R)-3-hydroxytetradecanoyl-[acyl-carrier-protein] and UDP-N-acetyl-alpha-D-glucosamine: step 6/6. In terms of biological role, transfers the gamma-phosphate of ATP to the 4'-position of a tetraacyldisaccharide 1-phosphate intermediate (termed DS-1-P) to form tetraacyldisaccharide 1,4'-bis-phosphate (lipid IVA). This Methylibium petroleiphilum (strain ATCC BAA-1232 / LMG 22953 / PM1) protein is Tetraacyldisaccharide 4'-kinase.